The sequence spans 156 residues: SsrA-binding protein (156 aa).

Residues 135-150 (KRDTIKDREWQRDRSR) show a composition bias toward basic and acidic residues. The interval 135–156 (KRDTIKDREWQRDRSRIMKKNT) is disordered.

The protein belongs to the SmpB family.

Its subcellular location is the cytoplasm. In terms of biological role, required for rescue of stalled ribosomes mediated by trans-translation. Binds to transfer-messenger RNA (tmRNA), required for stable association of tmRNA with ribosomes. tmRNA and SmpB together mimic tRNA shape, replacing the anticodon stem-loop with SmpB. tmRNA is encoded by the ssrA gene; the 2 termini fold to resemble tRNA(Ala) and it encodes a 'tag peptide', a short internal open reading frame. During trans-translation Ala-aminoacylated tmRNA acts like a tRNA, entering the A-site of stalled ribosomes, displacing the stalled mRNA. The ribosome then switches to translate the ORF on the tmRNA; the nascent peptide is terminated with the 'tag peptide' encoded by the tmRNA and targeted for degradation. The ribosome is freed to recommence translation, which seems to be the essential function of trans-translation. The chain is SsrA-binding protein from Legionella pneumophila (strain Corby).